Here is a 61-residue protein sequence, read N- to C-terminus: Sec-independent protein translocase protein TatA (61 aa).

Residues 1 to 21 traverse the membrane as a helical segment; it reads MFGLGITEILLILGIIILIFG.

The protein belongs to the TatA/E family. As to quaternary structure, the Tat system comprises two distinct complexes: a TatABC complex, containing multiple copies of TatA, TatB and TatC subunits, and a separate TatA complex, containing only TatA subunits. Substrates initially bind to the TatABC complex, which probably triggers association of the separate TatA complex to form the active translocon.

It localises to the cell inner membrane. Functionally, part of the twin-arginine translocation (Tat) system that transports large folded proteins containing a characteristic twin-arginine motif in their signal peptide across membranes. TatA could form the protein-conducting channel of the Tat system. The sequence is that of Sec-independent protein translocase protein TatA from Maridesulfovibrio salexigens (strain ATCC 14822 / DSM 2638 / NCIMB 8403 / VKM B-1763) (Desulfovibrio salexigens).